The chain runs to 212 residues: Pyridoxine/pyridoxamine 5'-phosphate oxidase (212 aa).

Residues Arg-7–Tyr-10 and Lys-65 each bind substrate. FMN-binding positions include Arg-60–Lys-65, Phe-75–Thr-76, Arg-81, Lys-82, and Gln-104. Tyr-122, Arg-126, and Ser-130 together coordinate substrate. FMN contacts are provided by residues Gln-139–Ser-140 and Trp-184. Arg-190–His-192 provides a ligand contact to substrate. Arg-194 lines the FMN pocket.

This sequence belongs to the pyridoxamine 5'-phosphate oxidase family. In terms of assembly, homodimer. Requires FMN as cofactor.

It carries out the reaction pyridoxamine 5'-phosphate + O2 + H2O = pyridoxal 5'-phosphate + H2O2 + NH4(+). The catalysed reaction is pyridoxine 5'-phosphate + O2 = pyridoxal 5'-phosphate + H2O2. Its pathway is cofactor metabolism; pyridoxal 5'-phosphate salvage; pyridoxal 5'-phosphate from pyridoxamine 5'-phosphate: step 1/1. It participates in cofactor metabolism; pyridoxal 5'-phosphate salvage; pyridoxal 5'-phosphate from pyridoxine 5'-phosphate: step 1/1. In terms of biological role, catalyzes the oxidation of either pyridoxine 5'-phosphate (PNP) or pyridoxamine 5'-phosphate (PMP) into pyridoxal 5'-phosphate (PLP). The polypeptide is Pyridoxine/pyridoxamine 5'-phosphate oxidase (Pseudoalteromonas translucida (strain TAC 125)).